The primary structure comprises 239 residues: Ribonuclease PH (239 aa).

Phosphate contacts are provided by residues R86 and 124 to 126 (GTR).

It belongs to the RNase PH family. As to quaternary structure, homohexameric ring arranged as a trimer of dimers.

It catalyses the reaction tRNA(n+1) + phosphate = tRNA(n) + a ribonucleoside 5'-diphosphate. In terms of biological role, phosphorolytic 3'-5' exoribonuclease that plays an important role in tRNA 3'-end maturation. Removes nucleotide residues following the 3'-CCA terminus of tRNAs; can also add nucleotides to the ends of RNA molecules by using nucleoside diphosphates as substrates, but this may not be physiologically important. Probably plays a role in initiation of 16S rRNA degradation (leading to ribosome degradation) during starvation. This is Ribonuclease PH from Rickettsia bellii (strain OSU 85-389).